Consider the following 219-residue polypeptide: Thiopurine S-methyltransferase (219 aa).

S-adenosyl-L-methionine is bound by residues Trp-10, Leu-45, Glu-66, and Arg-123.

Belongs to the class I-like SAM-binding methyltransferase superfamily. TPMT family.

It localises to the cytoplasm. The catalysed reaction is S-adenosyl-L-methionine + a thiopurine = S-adenosyl-L-homocysteine + a thiopurine S-methylether.. This Bordetella pertussis (strain Tohama I / ATCC BAA-589 / NCTC 13251) protein is Thiopurine S-methyltransferase.